Consider the following 408-residue polypeptide: Echinulin prenyltransferase 2 (408 aa).

10 residues coordinate dimethylallyl diphosphate: R94, K181, Y183, R248, K250, Y252, Q334, Y336, Y400, and Y404.

Belongs to the tryptophan dimethylallyltransferase family.

The catalysed reaction is preechinulin + dimethylallyl diphosphate = tardioxopiperazine B + diphosphate. The enzyme catalyses preechinulin + dimethylallyl diphosphate = tardioxopiperazine A + diphosphate. It carries out the reaction tardioxopiperazine A + dimethylallyl diphosphate = echinulin + diphosphate. It catalyses the reaction tardioxopiperazine A + dimethylallyl diphosphate = variecolorin L + diphosphate. The catalysed reaction is neoechinulin A + dimethylallyl diphosphate = variecolorin G + diphosphate. The enzyme catalyses neoechinulin A + dimethylallyl diphosphate = isoechinulin A + diphosphate. It carries out the reaction isoechinulin A + dimethylallyl diphosphate = dehydroechinulin + diphosphate. It catalyses the reaction neoechinulin B + dimethylallyl diphosphate = isoechinulin B + diphosphate. It participates in secondary metabolite biosynthesis. It functions in the pathway alkaloid biosynthesis. In terms of biological role, prenyltransferase; part of the gene cluster that mediates the biosynthesis of echinulin family alkaloid. The pathway begins with the biosynthesis of the cyclic dipeptide cyclo-L-Trp-L-Ala (cyclo-TA) by the NRPS echPS via condensation of L-alanine and L-tryptophan. The prenyltransferase echPT1 then catalyzes the first prenylation step, a reverse prenylation reaction at C2, to yield preechinulin. Preechinulin is the substrate of the cytochrome P450 monooxygenase echP450 that catalyzes the formation of the double bond between C10 and C11 to produce neoechulin A. The unique prenyltransferase echPT2 functions as a competitive enzyme with echP450 for preechinulin metabolization and uses preechinulin for effective regiospecific prenylations. Preechinulin is prenylated by echPT2 at C5 or C7. C7-prenylation leads to accumulation of tardioxopiperazine B without further modification by echPT2. In contrast, the C5-prenylated tardioxopiperazine A can be prenylated again by echPT2, predominantly at C7 to form echinulin or less frequently at C4 to give variecolorin L. EchPT2 also accepts neoechilunin A to produce varlecolorin G (prenylation at C5) or isoechinulin A (prenylation at C7). EchPT2 further converts isoechinulin A into dehydroechinulin. Moreover, a yet unidentified enzyme can also convert neoechilunin A into neoechilunin B by introducing a double bond between positions C14 and C17 and thus provides a further substrate to echPT2 for C5 and C7 prenylation. This Aspergillus ruber (Eurotium rubrum) protein is Echinulin prenyltransferase 2.